Consider the following 460-residue polypeptide: 1-aminocyclopropane-1-carboxylate synthase 11 (460 aa).

2 residues coordinate substrate: glutamate 45 and tyrosine 83. Lysine 267 is modified (N6-(pyridoxal phosphate)lysine).

It belongs to the class-I pyridoxal-phosphate-dependent aminotransferase family. In terms of assembly, homodimer and heterodimer. In vivo, the relevance of heterodimerization with other ACS enzymes is however unsure. Interacts with GRF3. Pyridoxal 5'-phosphate is required as a cofactor. May be processed at its C-terminus. As to expression, expressed in roots.

It carries out the reaction S-adenosyl-L-methionine = 1-aminocyclopropane-1-carboxylate + S-methyl-5'-thioadenosine + H(+). Its pathway is alkene biosynthesis; ethylene biosynthesis via S-adenosyl-L-methionine; ethylene from S-adenosyl-L-methionine: step 1/2. Its function is as follows. 1-aminocyclopropane-1-carboxylate synthase (ACS) enzymes catalyze the conversion of S-adenosyl-L-methionine (SAM) into 1-aminocyclopropane-1-carboxylate (ACC), a direct precursor of ethylene. This chain is 1-aminocyclopropane-1-carboxylate synthase 11 (ACS11), found in Arabidopsis thaliana (Mouse-ear cress).